The sequence spans 304 residues: Acetyl-coenzyme A carboxylase carboxyl transferase subunit beta (304 aa).

A CoA carboxyltransferase N-terminal domain is found at 29 to 298 (LWSKCESCGA…ASDVSPAAVP (270 aa)). Residues Cys33, Cys36, Cys52, and Cys55 each coordinate Zn(2+). The segment at 33–55 (CESCGALTYTKDLRANQMVCLEC) adopts a C4-type zinc-finger fold.

This sequence belongs to the AccD/PCCB family. In terms of assembly, acetyl-CoA carboxylase is a heterohexamer composed of biotin carboxyl carrier protein (AccB), biotin carboxylase (AccC) and two subunits each of ACCase subunit alpha (AccA) and ACCase subunit beta (AccD). Requires Zn(2+) as cofactor.

It localises to the cytoplasm. The enzyme catalyses N(6)-carboxybiotinyl-L-lysyl-[protein] + acetyl-CoA = N(6)-biotinyl-L-lysyl-[protein] + malonyl-CoA. Its pathway is lipid metabolism; malonyl-CoA biosynthesis; malonyl-CoA from acetyl-CoA: step 1/1. Functionally, component of the acetyl coenzyme A carboxylase (ACC) complex. Biotin carboxylase (BC) catalyzes the carboxylation of biotin on its carrier protein (BCCP) and then the CO(2) group is transferred by the transcarboxylase to acetyl-CoA to form malonyl-CoA. The sequence is that of Acetyl-coenzyme A carboxylase carboxyl transferase subunit beta from Acaryochloris marina (strain MBIC 11017).